A 202-amino-acid polypeptide reads, in one-letter code: NADH-quinone oxidoreductase subunit C (202 aa).

The protein belongs to the complex I 30 kDa subunit family. In terms of assembly, NDH-1 is composed of 14 different subunits. Subunits NuoB, C, D, E, F, and G constitute the peripheral sector of the complex.

The protein localises to the cell inner membrane. It catalyses the reaction a quinone + NADH + 5 H(+)(in) = a quinol + NAD(+) + 4 H(+)(out). Its function is as follows. NDH-1 shuttles electrons from NADH, via FMN and iron-sulfur (Fe-S) centers, to quinones in the respiratory chain. The immediate electron acceptor for the enzyme in this species is believed to be ubiquinone. Couples the redox reaction to proton translocation (for every two electrons transferred, four hydrogen ions are translocated across the cytoplasmic membrane), and thus conserves the redox energy in a proton gradient. The polypeptide is NADH-quinone oxidoreductase subunit C (Albidiferax ferrireducens (strain ATCC BAA-621 / DSM 15236 / T118) (Rhodoferax ferrireducens)).